Consider the following 225-residue polypeptide: 3-dehydroquinate dehydratase (225 aa).

3-dehydroquinate is bound by residues 30–32 (EWR) and Arg62. The active-site Proton donor/acceptor is the His118. Catalysis depends on Lys143, which acts as the Schiff-base intermediate with substrate. 3-dehydroquinate is bound by residues Arg186, Ser205, and Gln209.

It belongs to the type-I 3-dehydroquinase family. Homodimer.

It catalyses the reaction 3-dehydroquinate = 3-dehydroshikimate + H2O. The protein operates within metabolic intermediate biosynthesis; chorismate biosynthesis; chorismate from D-erythrose 4-phosphate and phosphoenolpyruvate: step 3/7. Its function is as follows. Involved in the third step of the chorismate pathway, which leads to the biosynthesis of aromatic amino acids. Catalyzes the cis-dehydration of 3-dehydroquinate (DHQ) and introduces the first double bond of the aromatic ring to yield 3-dehydroshikimate. The protein is 3-dehydroquinate dehydratase of Streptococcus thermophilus (strain ATCC BAA-491 / LMD-9).